The primary structure comprises 221 residues: Transcription factor bHLH148 (221 aa).

2 disordered regions span residues 1–45 (MASL…GEIH) and 70–89 (LNSS…GKAV). 2 stretches are compositionally biased toward low complexity: residues 26–41 (SASS…SSVS) and 72–82 (SSASTSSSPTA). Residues 148 to 197 (KRRVSVLRLNKKSIPDVNRKVRVLGRLVPGCGKQSVPVILEEATDYIQAL) form the bHLH domain.

In terms of assembly, homodimer. Interacts with PRE3. Binds to RSA1.

Its subcellular location is the nucleus. BHLH transcription factor that binds DNA on specific sequence 5'-CANNTG-3' in target gene promoters. Negatively regulates brassinosteroid signaling. Together with BHLH148/RITF1, regulates the transcription of several genes involved in the detoxification of reactive oxygen species (ROS) generated by salt (NaCl) stress. Confers tolerance to salt and to the oxidative stress-inducing reagents hydrogen peroxide H(2)O(2) and methyl viologen (MV). This is Transcription factor bHLH148 from Arabidopsis thaliana (Mouse-ear cress).